The chain runs to 429 residues: MSSIVEIHGREVIDSRGNPTVEVDVYTEDGGFGRAAVPSGASTGSREAVELRDGDKSRFLGKGVRKAVDAVNTVLAEVVLGMEVADQKGIDAAMIALDGTHNKSRLGANAILGISMAVAKAAADECDLPLYRYLGGTNTSLLPVPMMNIINGGAHADNNVDIQEFMIMPVAATSCTEAIRMGAEVFHSLKKVLKSKGLNTAVGDEGGFAPNLGSNEEALKVIVEAIEAAGYKPGEDIKLALDCASSEFYNKETGNYDLTGEGRVLTKQELVAFYEDLVAKYPIISIEDGFDESDWDGWKLMTEALGNKIQLVGDDLFVTNSKILAEGISKGIANSILVKVNQIGTLTETFEAVEMAQRAGYTAVISHRSGETEDATIADIAVALNAGQIKTGSMSRSDRIAKYNQLIRIEEELGGMARFEGMKVFYNLR.

Residue Gln163 coordinates (2R)-2-phosphoglycerate. Glu205 serves as the catalytic Proton donor. Residues Asp242, Glu287, and Asp314 each contribute to the Mg(2+) site. Residues Lys339, Arg368, Ser369, and Lys390 each contribute to the (2R)-2-phosphoglycerate site. The active-site Proton acceptor is the Lys339.

Belongs to the enolase family. Mg(2+) serves as cofactor.

Its subcellular location is the cytoplasm. It localises to the secreted. The protein resides in the cell surface. The catalysed reaction is (2R)-2-phosphoglycerate = phosphoenolpyruvate + H2O. It functions in the pathway carbohydrate degradation; glycolysis; pyruvate from D-glyceraldehyde 3-phosphate: step 4/5. Its function is as follows. Catalyzes the reversible conversion of 2-phosphoglycerate (2-PG) into phosphoenolpyruvate (PEP). It is essential for the degradation of carbohydrates via glycolysis. The protein is Enolase of Magnetococcus marinus (strain ATCC BAA-1437 / JCM 17883 / MC-1).